A 122-amino-acid polypeptide reads, in one-letter code: Large ribosomal subunit protein uL14 (122 aa).

This sequence belongs to the universal ribosomal protein uL14 family. In terms of assembly, part of the 50S ribosomal subunit. Forms a cluster with proteins L3 and L19. In the 70S ribosome, L14 and L19 interact and together make contacts with the 16S rRNA in bridges B5 and B8.

Functionally, binds to 23S rRNA. Forms part of two intersubunit bridges in the 70S ribosome. This is Large ribosomal subunit protein uL14 from Corynebacterium aurimucosum (strain ATCC 700975 / DSM 44827 / CIP 107346 / CN-1) (Corynebacterium nigricans).